Here is a 963-residue protein sequence, read N- to C-terminus: Bifunctional glutamine synthetase adenylyltransferase/adenylyl-removing enzyme (963 aa).

The interval 1–453 (MLTTLIPLSQ…IFNEIIGEEE (453 aa)) is adenylyl removase. The adenylyl transferase stretch occupies residues 461–963 (VNEKLAEWKD…VREMWQRLLA (503 aa)).

It belongs to the GlnE family. Mg(2+) serves as cofactor.

It catalyses the reaction [glutamine synthetase]-O(4)-(5'-adenylyl)-L-tyrosine + phosphate = [glutamine synthetase]-L-tyrosine + ADP. The enzyme catalyses [glutamine synthetase]-L-tyrosine + ATP = [glutamine synthetase]-O(4)-(5'-adenylyl)-L-tyrosine + diphosphate. Its function is as follows. Involved in the regulation of glutamine synthetase GlnA, a key enzyme in the process to assimilate ammonia. When cellular nitrogen levels are high, the C-terminal adenylyl transferase (AT) inactivates GlnA by covalent transfer of an adenylyl group from ATP to specific tyrosine residue of GlnA, thus reducing its activity. Conversely, when nitrogen levels are low, the N-terminal adenylyl removase (AR) activates GlnA by removing the adenylyl group by phosphorolysis, increasing its activity. The regulatory region of GlnE binds the signal transduction protein PII (GlnB) which indicates the nitrogen status of the cell. The polypeptide is Bifunctional glutamine synthetase adenylyltransferase/adenylyl-removing enzyme (Mannheimia haemolytica (Pasteurella haemolytica)).